A 256-amino-acid polypeptide reads, in one-letter code: MTEIVAIPAFADNYIWLAVDRNRRLAAVVDPGDAEPVEAALRASGLRLSAILITHHHHDHTGGVEELLAAHPVPVYGPADESVPGVSQPLREPDAFEVPGLGLPLRVLDVPGHTAGHIALVADGALFSGDALFAGGCGRLFEGTPEQMYASLGKLAALPEATRVYCGHEYTLANLRFAHQVEPDNPNLTQRLRQAEAARQRGEPTVPSRMADEHATNPFLRAHLPAVRTAAERWSGQTLDEPVAVFAALRRWKDQS.

Zn(2+)-binding residues include H55, H57, D59, H60, H113, D130, and H168.

This sequence belongs to the metallo-beta-lactamase superfamily. Glyoxalase II family. In terms of assembly, monomer. Zn(2+) is required as a cofactor.

It catalyses the reaction an S-(2-hydroxyacyl)glutathione + H2O = a 2-hydroxy carboxylate + glutathione + H(+). It participates in secondary metabolite metabolism; methylglyoxal degradation; (R)-lactate from methylglyoxal: step 2/2. Its function is as follows. Thiolesterase that catalyzes the hydrolysis of S-D-lactoyl-glutathione to form glutathione and D-lactic acid. The protein is Hydroxyacylglutathione hydrolase of Alkalilimnicola ehrlichii (strain ATCC BAA-1101 / DSM 17681 / MLHE-1).